The sequence spans 274 residues: 3-methyl-2-oxobutanoate hydroxymethyltransferase (274 aa).

Mg(2+) contacts are provided by Asp-44 and Asp-83. 3-methyl-2-oxobutanoate contacts are provided by residues Asp-44–Ser-45, Asp-83, and Lys-113. Glu-115 lines the Mg(2+) pocket. Glu-182 functions as the Proton acceptor in the catalytic mechanism.

It belongs to the PanB family. In terms of assembly, homodecamer; pentamer of dimers. It depends on Mg(2+) as a cofactor.

The protein resides in the cytoplasm. It catalyses the reaction 3-methyl-2-oxobutanoate + (6R)-5,10-methylene-5,6,7,8-tetrahydrofolate + H2O = 2-dehydropantoate + (6S)-5,6,7,8-tetrahydrofolate. The protein operates within cofactor biosynthesis; (R)-pantothenate biosynthesis; (R)-pantoate from 3-methyl-2-oxobutanoate: step 1/2. Catalyzes the reversible reaction in which hydroxymethyl group from 5,10-methylenetetrahydrofolate is transferred onto alpha-ketoisovalerate to form ketopantoate. In Campylobacter jejuni subsp. jejuni serotype O:23/36 (strain 81-176), this protein is 3-methyl-2-oxobutanoate hydroxymethyltransferase.